The primary structure comprises 211 residues: Envelope protein UL45 homolog (211 aa).

The Intravirion segment spans residues 1 to 46 (MMSPTPEDDRDLVVVRGRLRMMDNGAEHDRERRSYTAWPHLCCGCT). A helical; Signal-anchor for type II membrane protein transmembrane segment spans residues 47-67 (IGIILTMFVIATTLLLASLFA). Residues 68–211 (FSYMSLESGT…SSILSNAIMK (144 aa)) lie on the Virion surface side of the membrane. Residues asparagine 96 and asparagine 133 are each glycosylated (N-linked (GlcNAc...) asparagine; by host).

The protein belongs to the herpesviridae HHV-1 UL45 family.

The protein resides in the virion membrane. The sequence is that of Envelope protein UL45 homolog (UL45H) from Gallid herpesvirus 2 (strain bc-1) (GaHV-2).